The chain runs to 412 residues: Hyaluronidase-3 (412 aa).

Residues 1-22 (MITQLGLTLVVGLTLCLVHVQA) form the signal peptide. Cystine bridges form between Cys42/Cys332, Cys206/Cys221, Cys357/Cys368, Cys362/Cys396, and Cys398/Cys407. N-linked (GlcNAc...) asparagine glycosylation occurs at Asn69. Glu129 functions as the Proton donor in the catalytic mechanism. The N-linked (GlcNAc...) asparagine glycan is linked to Asn216. The EGF-like domain occupies 353-408 (AATACSHQRCHGHGRCSWKDPGQMEAFLHLQPDDNLGAWKSFRCRCYLGWSGPTCL).

This sequence belongs to the glycosyl hydrolase 56 family. Post-translationally, N-glycosylated.

Its subcellular location is the secreted. The protein localises to the cell membrane. It is found in the cytoplasmic vesicle. It localises to the secretory vesicle. The protein resides in the acrosome. Its subcellular location is the endoplasmic reticulum. The protein localises to the early endosome. It catalyses the reaction Random hydrolysis of (1-&gt;4)-linkages between N-acetyl-beta-D-glucosamine and D-glucuronate residues in hyaluronate.. In terms of biological role, facilitates sperm penetration into the layer of cumulus cells surrounding the egg by digesting hyaluronic acid. Involved in induction of the acrosome reaction in the sperm. Involved in follicular atresia, the breakdown of immature ovarian follicles that are not selected to ovulate. Induces ovarian granulosa cell apoptosis, possibly via apoptotic signaling pathway involving CASP8 and CASP3 activation, and poly(ADP-ribose) polymerase (PARP) cleavage. Has no hyaluronidase activity in embryonic fibroblasts in vitro. Has no hyaluronidase activity in granulosa cells in vitro. The chain is Hyaluronidase-3 (Hyal3) from Rattus norvegicus (Rat).